A 255-amino-acid chain; its full sequence is Putative oxidoreductase YtkK (255 aa).

NAD(+) is bound at residue 7 to 14; sequence TAGSKGLG.

The protein belongs to the short-chain dehydrogenases/reductases (SDR) family.

In Bacillus subtilis (strain 168), this protein is Putative oxidoreductase YtkK (ytkK).